Consider the following 739-residue polypeptide: Phosphoribosylformylglycinamidine synthase subunit PurL (739 aa).

The active site involves His49. Residues Tyr52 and Lys91 each coordinate ATP. Residue Glu93 coordinates Mg(2+). Substrate-binding positions include 94-97 (SHNH) and Arg116. His95 functions as the Proton acceptor in the catalytic mechanism. Asp117 contacts Mg(2+). Gln240 is a binding site for substrate. Residue Asp268 participates in Mg(2+) binding. Position 312 to 314 (312 to 314 (ESQ)) interacts with substrate. 2 residues coordinate ATP: Asp493 and Gly530. Position 531 (Asn531) interacts with Mg(2+). Ser533 lines the substrate pocket.

Belongs to the FGAMS family. In terms of assembly, monomer. Part of the FGAM synthase complex composed of 1 PurL, 1 PurQ and 2 PurS subunits.

It localises to the cytoplasm. The catalysed reaction is N(2)-formyl-N(1)-(5-phospho-beta-D-ribosyl)glycinamide + L-glutamine + ATP + H2O = 2-formamido-N(1)-(5-O-phospho-beta-D-ribosyl)acetamidine + L-glutamate + ADP + phosphate + H(+). The protein operates within purine metabolism; IMP biosynthesis via de novo pathway; 5-amino-1-(5-phospho-D-ribosyl)imidazole from N(2)-formyl-N(1)-(5-phospho-D-ribosyl)glycinamide: step 1/2. Functionally, part of the phosphoribosylformylglycinamidine synthase complex involved in the purines biosynthetic pathway. Catalyzes the ATP-dependent conversion of formylglycinamide ribonucleotide (FGAR) and glutamine to yield formylglycinamidine ribonucleotide (FGAM) and glutamate. The FGAM synthase complex is composed of three subunits. PurQ produces an ammonia molecule by converting glutamine to glutamate. PurL transfers the ammonia molecule to FGAR to form FGAM in an ATP-dependent manner. PurS interacts with PurQ and PurL and is thought to assist in the transfer of the ammonia molecule from PurQ to PurL. The polypeptide is Phosphoribosylformylglycinamidine synthase subunit PurL (Parvibaculum lavamentivorans (strain DS-1 / DSM 13023 / NCIMB 13966)).